We begin with the raw amino-acid sequence, 43 residues long: Protein PsbN (43 aa).

A helical membrane pass occupies residues 7 to 27 (VAIFISCLLVSFTGYALYTAF).

The protein belongs to the PsbN family.

The protein resides in the plastid. Its subcellular location is the chloroplast thylakoid membrane. May play a role in photosystem I and II biogenesis. The polypeptide is Protein PsbN (Zygnema circumcarinatum (Green alga)).